Reading from the N-terminus, the 299-residue chain is GTPase Era (299 aa).

The 171-residue stretch at 5–175 (RSGFVCFVGR…TDVLAGKLPP (171 aa)) folds into the Era-type G domain. Residues 13 to 20 (GRPNTGKS) form a G1 region. Position 13 to 20 (13 to 20 (GRPNTGKS)) interacts with GTP. The tract at residues 39–43 (QTTRH) is G2. The tract at residues 60–63 (DTPG) is G3. GTP is bound by residues 60–64 (DTPGL) and 124–127 (TKID). The tract at residues 124–127 (TKID) is G4. The tract at residues 154–156 (VSA) is G5. Residues 206-285 (VRDELPHSLA…YLDLRVKIAK (80 aa)) form the KH type-2 domain.

Belongs to the TRAFAC class TrmE-Era-EngA-EngB-Septin-like GTPase superfamily. Era GTPase family. Monomer.

The protein resides in the cell envelope. Its subcellular location is the secreted. It is found in the cell wall. Functionally, exhibits GTPase activity. Binds RNA but is probably not involved in ribosome assembly in mycobacteria. The protein is GTPase Era of Mycobacterium sp. (strain JLS).